The sequence spans 156 residues: Small ribosomal subunit protein uS7c (156 aa).

It belongs to the universal ribosomal protein uS7 family. In terms of assembly, part of the 30S ribosomal subunit.

The protein resides in the plastid. It is found in the chloroplast. One of the primary rRNA binding proteins, it binds directly to 16S rRNA where it nucleates assembly of the head domain of the 30S subunit. This Phaeodactylum tricornutum (strain CCAP 1055/1) protein is Small ribosomal subunit protein uS7c (rps7).